The following is a 313-amino-acid chain: Methionyl-tRNA formyltransferase (313 aa).

A (6S)-5,6,7,8-tetrahydrofolate-binding site is contributed by 113-116 (SLLP).

It belongs to the Fmt family.

It catalyses the reaction L-methionyl-tRNA(fMet) + (6R)-10-formyltetrahydrofolate = N-formyl-L-methionyl-tRNA(fMet) + (6S)-5,6,7,8-tetrahydrofolate + H(+). Its function is as follows. Attaches a formyl group to the free amino group of methionyl-tRNA(fMet). The formyl group appears to play a dual role in the initiator identity of N-formylmethionyl-tRNA by promoting its recognition by IF2 and preventing the misappropriation of this tRNA by the elongation apparatus. This chain is Methionyl-tRNA formyltransferase, found in Acidithiobacillus ferrooxidans (strain ATCC 23270 / DSM 14882 / CIP 104768 / NCIMB 8455) (Ferrobacillus ferrooxidans (strain ATCC 23270)).